The sequence spans 511 residues: MLLYTKELVIPRPRPGLLRFRNNPRGIKFREKLCNSFAHSNIHGMQHVFGEQHLWQRCLWLAIVLGAVITGFSLYTVLMHRHSEQLLVSLIETTQLPVYHIDFPAVAVCPWNHFNWQRAPSAFIRFLPRHPNAELRETFRQLLASMDIMNFSNFNRIRILTKRNLTGISYLKMTDLMNFMTYRCDELFVADSCVFDETPYDCCKLFVREQTVKGQCLVFNSMISENSRKKHLINQFYPHKLSTAGEDSGLKFTINASYSFMNNIDALTPFGMNLMIKEPRQWSNEMMYHLYPDTENFVAVHPLVTETSPNTYEMSPKKRRCYFDDEKNPTFQNTSLTYNRENCLVVCLHLVVWKTCQCSLPAFLPPIDGVPECGINDAQCLGNNSDIFTYVKMGDQEKYINDSRQGHFCDCPDNCNSRLYEMSLNVRKLDYPKNSTDQLIKAQVYYGQRVMTKIITKLKYTNIDLLANFGGIISLYIGASVMSFIELLFVLGKLMWGFIRDARIKLKEYTK.

The next 2 helical transmembrane spans lie at 59 to 79 (LWLA…TVLM) and 471 to 491 (GIIS…LFVL).

This sequence belongs to the amiloride-sensitive sodium channel (TC 1.A.6) family. In terms of tissue distribution, expressed in the tracheal system. Expressed in the taste-sensing terminal organ of the larval head. In adults, expressed in hairs on the tibia, femur and wing margin, but not in hairs on the tarsi of the leg.

It localises to the membrane. Its function is as follows. Part of a complex that plays a role in tracheal liquid clearance. In both larvae and adults, contributes to the behavioral response to salt. Probable role in sodium transport. In Drosophila melanogaster (Fruit fly), this protein is Pickpocket protein 19 (ppk19).